The primary structure comprises 469 residues: Putative dipeptidase SH1171 (469 aa).

A Zn(2+)-binding site is contributed by His84. Asp86 is an active-site residue. Position 115 (Asp115) interacts with Zn(2+). Glu149 functions as the Proton acceptor in the catalytic mechanism. Zn(2+) contacts are provided by Glu150, Asp173, and His440.

This sequence belongs to the peptidase M20A family. Zn(2+) is required as a cofactor.

This chain is Putative dipeptidase SH1171, found in Staphylococcus haemolyticus (strain JCSC1435).